A 297-amino-acid chain; its full sequence is UDP-N-acetylenolpyruvoylglucosamine reductase (297 aa).

The 174-residue stretch at 22-195 (RAGGTARYYA…LAGRFRLQRG (174 aa)) folds into the FAD-binding PCMH-type domain. Arg-169 is an active-site residue. Ser-223 serves as the catalytic Proton donor. The active site involves Glu-293.

Belongs to the MurB family. It depends on FAD as a cofactor.

It localises to the cytoplasm. The enzyme catalyses UDP-N-acetyl-alpha-D-muramate + NADP(+) = UDP-N-acetyl-3-O-(1-carboxyvinyl)-alpha-D-glucosamine + NADPH + H(+). The protein operates within cell wall biogenesis; peptidoglycan biosynthesis. Functionally, cell wall formation. The sequence is that of UDP-N-acetylenolpyruvoylglucosamine reductase from Chloroflexus aurantiacus (strain ATCC 29364 / DSM 637 / Y-400-fl).